The primary structure comprises 267 residues: uncharacterized protein (267 aa).

A disordered region spans residues 58–90; the sequence is RHTDDKQEKNQNEGEDNQKGENKTTDQQDGPKK. 2 consecutive transmembrane segments (helical) span residues 101–121 and 226–246; these read IYVL…LSQM and GMTT…AWLG.

The protein localises to the membrane. This is an uncharacterized protein from Caenorhabditis elegans.